The sequence spans 229 residues: DNA mismatch repair protein MutH (229 aa).

Belongs to the MutH family.

The protein localises to the cytoplasm. Its function is as follows. Sequence-specific endonuclease that cleaves unmethylated GATC sequences. It is involved in DNA mismatch repair. In Shigella dysenteriae serotype 1 (strain Sd197), this protein is DNA mismatch repair protein MutH.